We begin with the raw amino-acid sequence, 404 residues long: Spore development regulator RYP2 (404 aa).

Disordered regions lie at residues 1–46, 200–231, and 382–404; these read MSAP…RKAV, LLKR…SSQQ, and SGQS…PAWG. Residues 17 to 194 enclose the Velvet domain; sequence LQSADFRLTV…ADQGVKLRIR (178 aa). Over residues 29-46 the composition is skewed to basic and acidic residues; the sequence is NPERARVAGGKEKERKAV. The segment covering 382–397 has biased composition (polar residues); that stretch reads SGQSFSQSAGHMQSPS.

The protein belongs to the velvet family. VosA subfamily. Forms a heterodimeric complex with RYP3; the formation of the RYP2-RYP3 complex is light-dependent.

It is found in the nucleus. In terms of biological role, component of the RYP2-RYP3 heterodimeric complex that plays a dual role in activating genes associated with spore maturation and repressing certain development-associated genes. The complex binds DNA through the DNA-binding domain of vosA that recognizes an 11-nucleotide consensus sequence 5'-CTGGCCGCGGC-3' consisting of two motifs in the promoters of key developmental regulatory genes. Required for viable spore production and regulation of sporulation in response to temperature and for the switch to yeast-form in the presence of host cells. In Ajellomyces capsulatus (Darling's disease fungus), this protein is Spore development regulator RYP2.